A 74-amino-acid chain; its full sequence is Exodeoxyribonuclease 7 small subunit (74 aa).

This sequence belongs to the XseB family. As to quaternary structure, heterooligomer composed of large and small subunits.

The protein localises to the cytoplasm. The enzyme catalyses Exonucleolytic cleavage in either 5'- to 3'- or 3'- to 5'-direction to yield nucleoside 5'-phosphates.. Bidirectionally degrades single-stranded DNA into large acid-insoluble oligonucleotides, which are then degraded further into small acid-soluble oligonucleotides. The polypeptide is Exodeoxyribonuclease 7 small subunit (Symbiobacterium thermophilum (strain DSM 24528 / JCM 14929 / IAM 14863 / T)).